The chain runs to 1080 residues: Ubiquitin-activating enzyme E1 1 (1080 aa).

Basic and acidic residues predominate over residues 1 to 14; sequence MLHKRASEANDKND. Disordered regions lie at residues 1 to 20 and 29 to 50; these read MLHK…IIGS and RIDF…GSSR. The segment covering 38–49 has biased composition (low complexity); it reads DKSSSILASGSS. ATP contacts are provided by residues Ala-502, Asp-528, Arg-539, Lys-552, and 600–601; that span reads DN. Cys-656 functions as the Glycyl thioester intermediate in the catalytic mechanism.

This sequence belongs to the ubiquitin-activating E1 family. In terms of assembly, monomer. As to expression, expressed in leaves, flowers, roots and stems. Detected in germinating seeds, cotyledons, hypocotyls, vascular tissues, anthers, filaments, pollen, style, stigma, sepals, petals, ovary, developing ovules, funiculi and silique walls.

The enzyme catalyses ATP + ubiquitin + [E1 ubiquitin-activating enzyme]-L-cysteine = AMP + diphosphate + S-ubiquitinyl-[E1 ubiquitin-activating enzyme]-L-cysteine.. It functions in the pathway protein modification; protein ubiquitination. Its function is as follows. Activates ubiquitin by first adenylating its C-terminal glycine residue with ATP, and thereafter linking this residue to the side chain of a cysteine residue in E1, yielding a ubiquitin-E1 thioester and free AMP. The polypeptide is Ubiquitin-activating enzyme E1 1 (UBA1) (Arabidopsis thaliana (Mouse-ear cress)).